We begin with the raw amino-acid sequence, 520 residues long: GMP synthase [glutamine-hydrolyzing] (520 aa).

The 198-residue stretch at 3-200 folds into the Glutamine amidotransferase type-1 domain; the sequence is AIAIIDFGSQ…FLDIANCKRD (198 aa). Cysteine 84 serves as the catalytic Nucleophile. Catalysis depends on residues histidine 175 and glutamate 177. Residues 201 to 386 form the GMPS ATP-PPase domain; sequence WTMKSIIEKQ…IGLSNEIIFQ (186 aa). 228-234 is an ATP binding site; it reads SGGVDSS.

Homodimer.

It carries out the reaction XMP + L-glutamine + ATP + H2O = GMP + L-glutamate + AMP + diphosphate + 2 H(+). Its pathway is purine metabolism; GMP biosynthesis; GMP from XMP (L-Gln route): step 1/1. Functionally, catalyzes the synthesis of GMP from XMP. This is GMP synthase [glutamine-hydrolyzing] from Wolbachia sp. subsp. Brugia malayi (strain TRS).